Here is a 291-residue protein sequence, read N- to C-terminus: MRRYPAVAGQFYPEGDALIEMLSSFFKDLGEEGTKRTITAGVAPHAGYVFSGFTASRTYKAIYEDGLPEVFVIFGPNHTGLGSPIALYPEGEWITPMGSIKVDSKFAKEIVKRSGIADLDDLAHKYEHSIEVQLPFIQYIAEKAGVEVKIVPITLGIQDEEVSRSLGRSIFEASTSLGRDTIIIASTDFMHYGSFYGYVPFRGRPEELPNMVRDWDMRIIRRILDFDLDGMFSEIREMNHTMCGPGGVGAGIIYSRLMKAKEAELLHYTTSFEVSRSPDAIVGYASIIMKR.

Belongs to the MEMO1 family.

The polypeptide is MEMO1 family protein PH1626 (Pyrococcus horikoshii (strain ATCC 700860 / DSM 12428 / JCM 9974 / NBRC 100139 / OT-3)).